The sequence spans 131 residues: Cruxhalorhodopsin-1 (131 aa).

The helical transmembrane segment at 1 to 11 (PMILLALGLLA) threads the bilayer. Topologically, residues 12–14 (DTD) are cytoplasmic. Residues 15-38 (IASLFTAITMDIGMCVTGLAAALI) traverse the membrane as a helical segment. The Extracellular segment spans residues 39-41 (TSS). A helical membrane pass occupies residues 42–64 (HLLRWVFYGISCAFFVAVLYVLL). The Cytoplasmic segment spans residues 65 to 76 (VQWPADAEAAGT). The chain crosses the membrane as a helical span at residues 77-100 (SEIFGTLKILTVVLWLGYPILWAL). The Extracellular portion of the chain corresponds to 101 to 109 (GSEGVALLS). Residues 110 to 131 (VGVTSWGYSGLDILAKYVFAFI) form a helical membrane-spanning segment. K125 carries the post-translational modification N6-(retinylidene)lysine.

The protein belongs to the archaeal/bacterial/fungal opsin family.

It localises to the cell membrane. Light-driven chloride pump. This Haloarcula argentinensis protein is Cruxhalorhodopsin-1 (choP1).